The following is a 173-amino-acid chain: Translation initiation factor IF-3 (173 aa).

The protein belongs to the IF-3 family. As to quaternary structure, monomer.

It is found in the cytoplasm. In terms of biological role, IF-3 binds to the 30S ribosomal subunit and shifts the equilibrium between 70S ribosomes and their 50S and 30S subunits in favor of the free subunits, thus enhancing the availability of 30S subunits on which protein synthesis initiation begins. The protein is Translation initiation factor IF-3 of Bartonella bacilliformis (strain ATCC 35685 / KC583 / Herrer 020/F12,63).